The following is a 213-amino-acid chain: Na(+)-translocating NADH-quinone reductase subunit D (213 aa).

Transmembrane regions (helical) follow at residues 22–42 (LIAI…TTAL), 43–63 (TMGF…SLLR), 77–97 (IIIS…FFTI), 101–121 (LSVF…AESM), 131–151 (FLDG…ISII), and 183–203 (LGLM…IWIV).

It belongs to the NqrDE/RnfAE family. In terms of assembly, composed of six subunits; NqrA, NqrB, NqrC, NqrD, NqrE and NqrF.

Its subcellular location is the cell inner membrane. The catalysed reaction is a ubiquinone + n Na(+)(in) + NADH + H(+) = a ubiquinol + n Na(+)(out) + NAD(+). Functionally, NQR complex catalyzes the reduction of ubiquinone-1 to ubiquinol by two successive reactions, coupled with the transport of Na(+) ions from the cytoplasm to the periplasm. NqrA to NqrE are probably involved in the second step, the conversion of ubisemiquinone to ubiquinol. The protein is Na(+)-translocating NADH-quinone reductase subunit D of Chlamydia trachomatis serovar L2 (strain ATCC VR-902B / DSM 19102 / 434/Bu).